Here is a 154-residue protein sequence, read N- to C-terminus: SsrA-binding protein (154 aa).

The protein belongs to the SmpB family.

Its subcellular location is the cytoplasm. In terms of biological role, required for rescue of stalled ribosomes mediated by trans-translation. Binds to transfer-messenger RNA (tmRNA), required for stable association of tmRNA with ribosomes. tmRNA and SmpB together mimic tRNA shape, replacing the anticodon stem-loop with SmpB. tmRNA is encoded by the ssrA gene; the 2 termini fold to resemble tRNA(Ala) and it encodes a 'tag peptide', a short internal open reading frame. During trans-translation Ala-aminoacylated tmRNA acts like a tRNA, entering the A-site of stalled ribosomes, displacing the stalled mRNA. The ribosome then switches to translate the ORF on the tmRNA; the nascent peptide is terminated with the 'tag peptide' encoded by the tmRNA and targeted for degradation. The ribosome is freed to recommence translation, which seems to be the essential function of trans-translation. The sequence is that of SsrA-binding protein from Staphylococcus aureus (strain USA300).